The sequence spans 143 residues: Hemoglobin subunit alpha (143 aa).

Residues 3–143 enclose the Globin domain; sequence KLSGEDKANV…TMRLCISKYR (141 aa). Histidine 60 contacts O2. Histidine 89 provides a ligand contact to heme b.

This sequence belongs to the globin family. In terms of assembly, heterotetramer of two alpha chains and two beta chains. As to expression, red blood cells.

Its function is as follows. Involved in oxygen transport from the lung to the various peripheral tissues. In Ambystoma mexicanum (Axolotl), this protein is Hemoglobin subunit alpha (HBA).